Reading from the N-terminus, the 716-residue chain is Polyribonucleotide nucleotidyltransferase (716 aa).

2 residues coordinate Mg(2+): Asp490 and Asp496. In terms of domain architecture, KH spans 556–615 (PKIETLTIPTDKIREVIGSGGKVIREIVETSGAKVDINDDGVIKIASNDQAAIKKAYDMI). Positions 625–693 (GQIYTGKVVK…ERGKVRLGMK (69 aa)) constitute an S1 motif domain. The interval 695 to 716 (VDQETGQEIQPEKKEREEAGEA) is disordered. The span at 704 to 716 (QPEKKEREEAGEA) shows a compositional bias: basic and acidic residues.

Belongs to the polyribonucleotide nucleotidyltransferase family. Mg(2+) serves as cofactor.

It localises to the cytoplasm. It carries out the reaction RNA(n+1) + phosphate = RNA(n) + a ribonucleoside 5'-diphosphate. In terms of biological role, involved in mRNA degradation. Catalyzes the phosphorolysis of single-stranded polyribonucleotides processively in the 3'- to 5'-direction. This is Polyribonucleotide nucleotidyltransferase from Cereibacter sphaeroides (strain KD131 / KCTC 12085) (Rhodobacter sphaeroides).